We begin with the raw amino-acid sequence, 658 residues long: MMPIRDGQPAPRGASYDGKGVNFSLFSQRAERVELCLYDDDGVETRLDLPAHSGDIWHGYLPAVRPGQRYGYRVHGPWQPQQGLRFNPAKLLLDPCARGIEGEVTDNPCFQSGEEQPDTLDSGPLAPKGVVLADDFDWEDDTWPRVPWGSTVIYEAHVRGLTQLHPGIPAEMRGTYAALGHPVMIDYFQRLGITSLQLLPVACFASEPRLLRLGLSNYWGYNPLACYALESRYACGQNPREEFQQAVKTLHQAGIEVILDVVFNHSAELDENGPTLSMRGIDNPTYYWLDGQGNYDNWTGCGNTQNLVHPEAVASTLDCLRYWVEECHIDGFRFDLATTLGRTPEYRRDAPLFQAIAADPLLAQCKIIAEPWDIGPRGYQVGNFPPPFAEWNDHFRDTARRYWLHGDFSNGDFARRFAASSDLFQKQGRLPSASLNYITAHDGFTLRDLVSFEHKHNEANGEDNRDGSNNNFSYNHGVEGLKAPLLVTEHRRRSIHALLTTLLLAQGTPMLLAGDEHGHSQHGNNNAYCQDNVLTWLDWKHGDRGLFSFTAALIHLRRRIPALQQDRWWQEGDGSVEWLNGQGRQLNRLEWEQGVHRLQIRLSKQWLITLNATEEVCDLVLPPGKWHAVPPFAGEDNPILLTVWHGAAQGVCVFQEKS.

The Nucleophile role is filled by Asp-335. The active-site Proton donor is the Glu-370.

The protein belongs to the glycosyl hydrolase 13 family.

It carries out the reaction Hydrolysis of (1-&gt;6)-alpha-D-glucosidic linkages to branches with degrees of polymerization of three or four glucose residues in limit dextrin.. Its pathway is glycan degradation; glycogen degradation. Removes maltotriose and maltotetraose chains that are attached by 1,6-alpha-linkage to the limit dextrin main chain, generating a debranched limit dextrin. This is Glycogen debranching enzyme from Erwinia tasmaniensis (strain DSM 17950 / CFBP 7177 / CIP 109463 / NCPPB 4357 / Et1/99).